Here is a 490-residue protein sequence, read N- to C-terminus: MVPVVALVGRPNVGKSTLFNRLTRTRDALVADFPGLTRDRKYGRAEIEGREFICIDTGGIDGTEDGVETRMAEQSLLAIEEADVVLFMVDARAGLMPADEAIAKHLRSREKPTFLVANKTDGLDPDQAVVDFYSLGLGEIYPIAASHGRGVLSLLEHVLLPWMEDLAPQEEVDEDAEYWAQFEAEENGEEEEEDDFDPQSLPIKLAIVGRPNVGKSTLTNRILGEERVVVYDMPGTTRDSIYIPMERDGREYVLIDTAGVRKRGKITDAVEKFSVIKTLQAIEDANVVMLVIDAREGISDQDLSLLGFILNSGRSLVIVVNKWDGLSQEVKEQVKETLDFRLGFIDFARVHFISALHGSGVGNLFESVREAYDSSTRRVGTSMLTRIMTMAVEDHQPPLVRGRRVKLKYAHAGGYNPPIVVIHGNQVKDLPDSYKRYLMNYFRKSLDVMGTPIRIQFKEGENPYANKRNTLTPTQMRKRKRLMKHIKKSK.

EngA-type G domains follow at residues 3-166 and 203-376; these read PVVA…MEDL and IKLA…DSST. GTP contacts are provided by residues 9 to 16, 56 to 60, 118 to 121, 209 to 216, 256 to 260, and 321 to 324; these read GRPNVGKS, DTGGI, NKTD, DTAGV, and NKWD. Residues 377-461 form the KH-like domain; that stretch reads RRVGTSMLTR…PIRIQFKEGE (85 aa).

This sequence belongs to the TRAFAC class TrmE-Era-EngA-EngB-Septin-like GTPase superfamily. EngA (Der) GTPase family. Associates with the 50S ribosomal subunit.

Functionally, GTPase that plays an essential role in the late steps of ribosome biogenesis. In Escherichia fergusonii (strain ATCC 35469 / DSM 13698 / CCUG 18766 / IAM 14443 / JCM 21226 / LMG 7866 / NBRC 102419 / NCTC 12128 / CDC 0568-73), this protein is GTPase Der.